We begin with the raw amino-acid sequence, 456 residues long: Bifunctional protein GlmU (456 aa).

The tract at residues 1 to 229 (MSNSSMSVVI…LSEVEGVNNR (229 aa)) is pyrophosphorylase. UDP-N-acetyl-alpha-D-glucosamine contacts are provided by residues 11–14 (LAAG), Lys-25, Gln-76, 81–82 (GT), 103–105 (YGD), Gly-140, Glu-154, Asn-169, and Asn-227. Residue Asp-105 participates in Mg(2+) binding. A Mg(2+)-binding site is contributed by Asn-227. The tract at residues 230-250 (LQLAALERVYQSEQAEKLLLA) is linker. The tract at residues 251–456 (GVMLLDPARF…QGWQRPIKKK (206 aa)) is N-acetyltransferase. Residues Arg-333 and Lys-351 each contribute to the UDP-N-acetyl-alpha-D-glucosamine site. The Proton acceptor role is filled by His-363. Residues Tyr-366 and Asn-377 each contribute to the UDP-N-acetyl-alpha-D-glucosamine site. Acetyl-CoA is bound by residues Ala-380, 386–387 (NY), Ser-405, Ala-423, and Arg-440.

It in the N-terminal section; belongs to the N-acetylglucosamine-1-phosphate uridyltransferase family. In the C-terminal section; belongs to the transferase hexapeptide repeat family. In terms of assembly, homotrimer. Mg(2+) serves as cofactor.

Its subcellular location is the cytoplasm. The enzyme catalyses alpha-D-glucosamine 1-phosphate + acetyl-CoA = N-acetyl-alpha-D-glucosamine 1-phosphate + CoA + H(+). It carries out the reaction N-acetyl-alpha-D-glucosamine 1-phosphate + UTP + H(+) = UDP-N-acetyl-alpha-D-glucosamine + diphosphate. Its pathway is nucleotide-sugar biosynthesis; UDP-N-acetyl-alpha-D-glucosamine biosynthesis; N-acetyl-alpha-D-glucosamine 1-phosphate from alpha-D-glucosamine 6-phosphate (route II): step 2/2. The protein operates within nucleotide-sugar biosynthesis; UDP-N-acetyl-alpha-D-glucosamine biosynthesis; UDP-N-acetyl-alpha-D-glucosamine from N-acetyl-alpha-D-glucosamine 1-phosphate: step 1/1. It functions in the pathway bacterial outer membrane biogenesis; LPS lipid A biosynthesis. In terms of biological role, catalyzes the last two sequential reactions in the de novo biosynthetic pathway for UDP-N-acetylglucosamine (UDP-GlcNAc). The C-terminal domain catalyzes the transfer of acetyl group from acetyl coenzyme A to glucosamine-1-phosphate (GlcN-1-P) to produce N-acetylglucosamine-1-phosphate (GlcNAc-1-P), which is converted into UDP-GlcNAc by the transfer of uridine 5-monophosphate (from uridine 5-triphosphate), a reaction catalyzed by the N-terminal domain. The protein is Bifunctional protein GlmU of Yersinia enterocolitica serotype O:8 / biotype 1B (strain NCTC 13174 / 8081).